We begin with the raw amino-acid sequence, 206 residues long: RNA pyrophosphohydrolase (206 aa).

The region spanning 6-150 is the Nudix hydrolase domain; sequence GYRPNVGIVI…KRDVYRKVMK (145 aa). Residues 38–59 carry the Nudix box motif; sequence GGINEGENIETAMYRELYEEVG. Basic and acidic residues predominate over residues 162–191; that stretch reads KPETVEKPRVERTEKRDFQKRDNQKREFRK. The interval 162-206 is disordered; it reads KPETVEKPRVERTEKRDFQKRDNQKREFRKSARMWNNSHQKGKAQ.

The protein belongs to the Nudix hydrolase family. RppH subfamily. A divalent metal cation is required as a cofactor.

Its function is as follows. Accelerates the degradation of transcripts by removing pyrophosphate from the 5'-end of triphosphorylated RNA, leading to a more labile monophosphorylated state that can stimulate subsequent ribonuclease cleavage. This is RNA pyrophosphohydrolase from Actinobacillus pleuropneumoniae serotype 7 (strain AP76).